Here is a 250-residue protein sequence, read N- to C-terminus: Isoprenyl transferase (250 aa).

D27 is an active-site residue. D27 lines the Mg(2+) pocket. Substrate-binding positions include 28 to 31, W32, H48, and 76 to 78; these read GNRR and STE. N79 (proton acceptor) is an active-site residue. Residues F80, R82, R199, and 205 to 207 each bind substrate; that span reads RVS. E218 is a Mg(2+) binding site.

It belongs to the UPP synthase family. Homodimer. Requires Mg(2+) as cofactor.

Catalyzes the condensation of isopentenyl diphosphate (IPP) with allylic pyrophosphates generating different type of terpenoids. The chain is Isoprenyl transferase from Chlamydia caviae (strain ATCC VR-813 / DSM 19441 / 03DC25 / GPIC) (Chlamydophila caviae).